The sequence spans 226 residues: V-type proton ATPase subunit E 2 (226 aa).

It belongs to the V-ATPase E subunit family. As to quaternary structure, V-ATPase is a heteromultimeric enzyme made up of two complexes: the ATP-hydrolytic V1 complex and the proton translocation V0 complex. The V1 complex consists of three catalytic AB heterodimers that form a heterohexamer, three peripheral stalks each consisting of EG heterodimers, one central rotor including subunits D and F, and the regulatory subunits C and H. The proton translocation complex V0 consists of the proton transport subunit a, a ring of proteolipid subunits c9c'', rotary subunit d, subunits e and f, and the accessory subunits ATP6AP1/Ac45 and ATP6AP2/PRR. In terms of tissue distribution, testis specific.

Subunit of the V1 complex of vacuolar(H+)-ATPase (V-ATPase), a multisubunit enzyme composed of a peripheral complex (V1) that hydrolyzes ATP and a membrane integral complex (V0) that translocates protons. V-ATPase is responsible for acidifying and maintaining the pH of intracellular compartments and in some cell types, is targeted to the plasma membrane, where it is responsible for acidifying the extracellular environment. The polypeptide is V-type proton ATPase subunit E 2 (ATP6V1E2) (Homo sapiens (Human)).